Here is a 373-residue protein sequence, read N- to C-terminus: S-adenosylmethionine:tRNA ribosyltransferase-isomerase (373 aa).

It belongs to the QueA family. As to quaternary structure, monomer.

It localises to the cytoplasm. It catalyses the reaction 7-aminomethyl-7-carbaguanosine(34) in tRNA + S-adenosyl-L-methionine = epoxyqueuosine(34) in tRNA + adenine + L-methionine + 2 H(+). Its pathway is tRNA modification; tRNA-queuosine biosynthesis. Transfers and isomerizes the ribose moiety from AdoMet to the 7-aminomethyl group of 7-deazaguanine (preQ1-tRNA) to give epoxyqueuosine (oQ-tRNA). The polypeptide is S-adenosylmethionine:tRNA ribosyltransferase-isomerase (Prochlorococcus marinus (strain MIT 9515)).